The following is a 41-amino-acid chain: MKIKNSLKALKERHRNNRLVRRKGRVYILNKTNPRFRARQG.

This sequence belongs to the bacterial ribosomal protein bL36 family.

This chain is Large ribosomal subunit protein bL36, found in Bartonella tribocorum (strain CIP 105476 / IBS 506).